Reading from the N-terminus, the 105-residue chain is Small ribosomal subunit protein uS10 (105 aa).

Belongs to the universal ribosomal protein uS10 family. Part of the 30S ribosomal subunit.

In terms of biological role, involved in the binding of tRNA to the ribosomes. The protein is Small ribosomal subunit protein uS10 of Acaryochloris marina (strain MBIC 11017).